The following is a 174-amino-acid chain: Shikimate kinase 2 (174 aa).

12 to 17 (GCGKTT) provides a ligand contact to ATP. 2 residues coordinate Mg(2+): Thr-16 and Asp-32. Residues Asp-34, Arg-58, and Gly-79 each coordinate substrate. The segment at 112 to 126 (QAAPEEDLRPTLTGK) is LID domain. ATP is bound at residue Arg-120. Residue Arg-139 coordinates substrate.

The protein belongs to the shikimate kinase family. AroL subfamily. As to quaternary structure, monomer. The cofactor is Mg(2+).

It is found in the cytoplasm. The enzyme catalyses shikimate + ATP = 3-phosphoshikimate + ADP + H(+). It participates in metabolic intermediate biosynthesis; chorismate biosynthesis; chorismate from D-erythrose 4-phosphate and phosphoenolpyruvate: step 5/7. Catalyzes the specific phosphorylation of the 3-hydroxyl group of shikimic acid using ATP as a cosubstrate. In Escherichia coli O1:K1 / APEC, this protein is Shikimate kinase 2.